Reading from the N-terminus, the 384-residue chain is Chorismate synthase (384 aa).

The NADP(+) site is built by R39 and R45. Residues 130-132 (RSS), 248-249 (NA), G292, 307-311 (KPIPT), and R333 contribute to the FMN site.

It belongs to the chorismate synthase family. Homotetramer. It depends on FMNH2 as a cofactor.

It catalyses the reaction 5-O-(1-carboxyvinyl)-3-phosphoshikimate = chorismate + phosphate. It functions in the pathway metabolic intermediate biosynthesis; chorismate biosynthesis; chorismate from D-erythrose 4-phosphate and phosphoenolpyruvate: step 7/7. Catalyzes the anti-1,4-elimination of the C-3 phosphate and the C-6 proR hydrogen from 5-enolpyruvylshikimate-3-phosphate (EPSP) to yield chorismate, which is the branch point compound that serves as the starting substrate for the three terminal pathways of aromatic amino acid biosynthesis. This reaction introduces a second double bond into the aromatic ring system. This is Chorismate synthase from Exiguobacterium sibiricum (strain DSM 17290 / CCUG 55495 / CIP 109462 / JCM 13490 / 255-15).